Consider the following 104-residue polypeptide: Large ribosomal subunit protein uL24 (104 aa).

Belongs to the universal ribosomal protein uL24 family. Part of the 50S ribosomal subunit.

One of two assembly initiator proteins, it binds directly to the 5'-end of the 23S rRNA, where it nucleates assembly of the 50S subunit. In terms of biological role, one of the proteins that surrounds the polypeptide exit tunnel on the outside of the subunit. This is Large ribosomal subunit protein uL24 from Buchnera aphidicola subsp. Baizongia pistaciae (strain Bp).